The primary structure comprises 360 residues: Aminomethyltransferase (360 aa).

The protein belongs to the GcvT family. In terms of assembly, the glycine cleavage system is composed of four proteins: P, T, L and H.

It carries out the reaction N(6)-[(R)-S(8)-aminomethyldihydrolipoyl]-L-lysyl-[protein] + (6S)-5,6,7,8-tetrahydrofolate = N(6)-[(R)-dihydrolipoyl]-L-lysyl-[protein] + (6R)-5,10-methylene-5,6,7,8-tetrahydrofolate + NH4(+). Functionally, the glycine cleavage system catalyzes the degradation of glycine. The protein is Aminomethyltransferase of Pseudomonas putida (strain ATCC 47054 / DSM 6125 / CFBP 8728 / NCIMB 11950 / KT2440).